A 300-amino-acid polypeptide reads, in one-letter code: tRNA dimethylallyltransferase (300 aa).

9-16 (GTTASGKS) is an ATP binding site. Residue 11–16 (TASGKS) participates in substrate binding. The interval 34–37 (DSLC) is interaction with substrate tRNA.

Belongs to the IPP transferase family. Monomer. Requires Mg(2+) as cofactor.

It carries out the reaction adenosine(37) in tRNA + dimethylallyl diphosphate = N(6)-dimethylallyladenosine(37) in tRNA + diphosphate. Its function is as follows. Catalyzes the transfer of a dimethylallyl group onto the adenine at position 37 in tRNAs that read codons beginning with uridine, leading to the formation of N6-(dimethylallyl)adenosine (i(6)A). This Campylobacter fetus subsp. fetus (strain 82-40) protein is tRNA dimethylallyltransferase.